We begin with the raw amino-acid sequence, 216 residues long: Elongation factor 1-beta (216 aa).

Belongs to the EF-1-beta/EF-1-delta family. In terms of assembly, EF-1 is composed of 4 subunits: alpha, beta, delta, and gamma. Interacts with actin.

It localises to the cytoplasm. Its function is as follows. EF-1-beta and EF-1-delta stimulate the exchange of GDP bound to EF-1-alpha to GTP. The chain is Elongation factor 1-beta (efa1B) from Dictyostelium discoideum (Social amoeba).